We begin with the raw amino-acid sequence, 153 residues long: Holo-[acyl-carrier-protein] synthase (153 aa).

2 residues coordinate Mg(2+): Asp24 and Glu78.

It belongs to the P-Pant transferase superfamily. AcpS family. Mg(2+) is required as a cofactor.

It localises to the cytoplasm. The catalysed reaction is apo-[ACP] + CoA = holo-[ACP] + adenosine 3',5'-bisphosphate + H(+). In terms of biological role, transfers the 4'-phosphopantetheine moiety from coenzyme A to a Ser of acyl-carrier-protein. The protein is Holo-[acyl-carrier-protein] synthase of Bordetella parapertussis (strain 12822 / ATCC BAA-587 / NCTC 13253).